Consider the following 105-residue polypeptide: Endogenous retrovirus group K member 16 Rec protein (105 aa).

Residues 1–41 form a disordered region; that stretch reads MNPSEMQRKAPPRRRRHRNRAPSSHKMNKMMMSEEQMKLPS. A compositionally biased stretch (basic residues) spans 10-20; the sequence is APPRRRRHRNR. The Nuclear localization signal signature appears at 13 to 20; that stretch reads RRRRHRNR. The Nuclear export signal motif lies at 50 to 59; that stretch reads WAQLNKLTQL.

In terms of assembly, forms homodimers, homotrimers, and homotetramers via a C-terminal domain. Associates with XPO1 and with ZNF145.

Its subcellular location is the cytoplasm. It is found in the nucleus. The protein resides in the nucleolus. Retroviral replication requires the nuclear export and translation of unspliced, singly-spliced and multiply-spliced derivatives of the initial genomic transcript. Rec interacts with a highly structured RNA element (RcRE) present in the viral 3'LTR and recruits the cellular nuclear export machinery. This permits export to the cytoplasm of unspliced genomic or incompletely spliced subgenomic viral transcripts. This is Endogenous retrovirus group K member 16 Rec protein (ERVK-16) from Homo sapiens (Human).